Here is a 191-residue protein sequence, read N- to C-terminus: dTTP/UTP pyrophosphatase (191 aa).

Aspartate 64 functions as the Proton acceptor in the catalytic mechanism.

It belongs to the Maf family. YhdE subfamily. The cofactor is a divalent metal cation.

It is found in the cytoplasm. It catalyses the reaction dTTP + H2O = dTMP + diphosphate + H(+). It carries out the reaction UTP + H2O = UMP + diphosphate + H(+). In terms of biological role, nucleoside triphosphate pyrophosphatase that hydrolyzes dTTP and UTP. May have a dual role in cell division arrest and in preventing the incorporation of modified nucleotides into cellular nucleic acids. This is dTTP/UTP pyrophosphatase from Thermosipho africanus (strain TCF52B).